A 334-amino-acid polypeptide reads, in one-letter code: Tetraacyldisaccharide 4'-kinase (334 aa).

Residue 60 to 67 (TVGGTGKT) coordinates ATP.

It belongs to the LpxK family.

The catalysed reaction is a lipid A disaccharide + ATP = a lipid IVA + ADP + H(+). It functions in the pathway glycolipid biosynthesis; lipid IV(A) biosynthesis; lipid IV(A) from (3R)-3-hydroxytetradecanoyl-[acyl-carrier-protein] and UDP-N-acetyl-alpha-D-glucosamine: step 6/6. Transfers the gamma-phosphate of ATP to the 4'-position of a tetraacyldisaccharide 1-phosphate intermediate (termed DS-1-P) to form tetraacyldisaccharide 1,4'-bis-phosphate (lipid IVA). This Stutzerimonas stutzeri (strain A1501) (Pseudomonas stutzeri) protein is Tetraacyldisaccharide 4'-kinase.